An 83-amino-acid chain; its full sequence is Short neurotoxin 1 (83 aa).

Residues 1–21 form the signal peptide; the sequence is MKTLLLTLVVVTIVCLDLGYT. 4 cysteine pairs are disulfide-bonded: Cys24–Cys45, Cys38–Cys62, Cys64–Cys75, and Cys76–Cys81.

This sequence belongs to the three-finger toxin family. Short-chain subfamily. Type I alpha-neurotoxin sub-subfamily. Expressed by the venom gland.

It is found in the secreted. Binds to muscle nicotinic acetylcholine receptor (nAChR) and inhibit acetylcholine from binding to the receptor, thereby impairing neuromuscular transmission. The protein is Short neurotoxin 1 of Pseudechis australis (Mulga snake).